The primary structure comprises 188 residues: Elongation factor P (188 aa).

Residue Lys34 is modified to N6-(3,6-diaminohexanoyl)-5-hydroxylysine.

Belongs to the elongation factor P family. Post-translationally, may be beta-lysylated on the epsilon-amino group of Lys-34 by the combined action of EpmA and EpmB, and then hydroxylated on the C5 position of the same residue by EpmC (if this protein is present). Lysylation is critical for the stimulatory effect of EF-P on peptide-bond formation. The lysylation moiety may extend toward the peptidyltransferase center and stabilize the terminal 3-CCA end of the tRNA. Hydroxylation of the C5 position on Lys-34 may allow additional potential stabilizing hydrogen-bond interactions with the P-tRNA.

The protein resides in the cytoplasm. The protein operates within protein biosynthesis; polypeptide chain elongation. Involved in peptide bond synthesis. Alleviates ribosome stalling that occurs when 3 or more consecutive Pro residues or the sequence PPG is present in a protein, possibly by augmenting the peptidyl transferase activity of the ribosome. Modification of Lys-34 is required for alleviation. The sequence is that of Elongation factor P from Coxiella burnetii (strain CbuK_Q154) (Coxiella burnetii (strain Q154)).